The primary structure comprises 324 residues: Geranylgeranyl diphosphate synthase (324 aa).

Lysine 46, arginine 49, and histidine 78 together coordinate isopentenyl diphosphate. Mg(2+) contacts are provided by aspartate 85 and aspartate 89. Position 94 (arginine 94) interacts with an all-trans-polyprenyl diphosphate. An isopentenyl diphosphate-binding site is contributed by arginine 95. An all-trans-polyprenyl diphosphate contacts are provided by lysine 176, threonine 177, glutamine 214, lysine 231, and lysine 241.

The protein belongs to the FPP/GGPP synthase family. Requires Mg(2+) as cofactor.

It catalyses the reaction isopentenyl diphosphate + (2E,6E)-farnesyl diphosphate = (2E,6E,10E)-geranylgeranyl diphosphate + diphosphate. The protein operates within isoprenoid biosynthesis; geranylgeranyl diphosphate biosynthesis; geranylgeranyl diphosphate from farnesyl diphosphate and isopentenyl diphosphate: step 1/1. Its function is as follows. Catalyzes the sequential condensation of isopentenyl pyrophosphate with the allylic pyrophosphates to yield geranylgeranyl diphosphate (GGPP) which is a precursor of the ether-linked lipids. This Methanosarcina mazei (strain ATCC BAA-159 / DSM 3647 / Goe1 / Go1 / JCM 11833 / OCM 88) (Methanosarcina frisia) protein is Geranylgeranyl diphosphate synthase.